The sequence spans 217 residues: Salivary glue protein Sgs-3 (217 aa).

Residues 1–23 (MKLTIATVLASILLIGFANVANC) form the signal peptide. The span at 45–130 (KSTSTTTTTT…KPTTHSTPKT (86 aa)) shows a compositional bias: low complexity. Positions 45–163 (KSTSTTTTTT…KHTTPTTTTT (119 aa)) are disordered. Positions 131–154 (KPTKHTTPKTKPTKHTTPKTKPTK) are enriched in basic residues.

This chain is Salivary glue protein Sgs-3 (Sgs3), found in Drosophila simulans (Fruit fly).